We begin with the raw amino-acid sequence, 377 residues long: Ribosomal RNA large subunit methyltransferase G (377 aa).

Belongs to the methyltransferase superfamily. RlmG family.

The protein resides in the cytoplasm. The catalysed reaction is guanosine(1835) in 23S rRNA + S-adenosyl-L-methionine = N(2)-methylguanosine(1835) in 23S rRNA + S-adenosyl-L-homocysteine + H(+). Its function is as follows. Specifically methylates the guanine in position 1835 (m2G1835) of 23S rRNA. This chain is Ribosomal RNA large subunit methyltransferase G, found in Shewanella sp. (strain MR-4).